A 121-amino-acid chain; its full sequence is Basic phospholipase A2 homolog blK-PLA2 (121 aa).

7 cysteine pairs are disulfide-bonded: Cys26/Cys115, Cys28/Cys44, Cys43/Cys95, Cys49/Cys121, Cys50/Cys88, Cys57/Cys81, and Cys75/Cys86. Residues 105–117 (KKYRYHLKPFCKK) are important for membrane-damaging activities in eukaryotes and bacteria; heparin-binding.

It belongs to the phospholipase A2 family. Group II subfamily. K49 sub-subfamily. Homodimer; non-covalently linked. In terms of tissue distribution, expressed by the venom gland.

It localises to the secreted. Its function is as follows. Snake venom phospholipase A2 (PLA2) homolog that lacks enzymatic activity. Shows myotoxic and edema-inducing activities in vivo. A model of myotoxic mechanism has been proposed: an apo Lys49-PLA2 is activated by the entrance of a hydrophobic molecule (e.g. fatty acid) at the hydrophobic channel of the protein leading to a reorientation of a monomer. This reorientation causes a transition between 'inactive' to 'active' states, causing alignment of C-terminal and membrane-docking sites (MDoS) side-by-side and putting the membrane-disruption sites (MDiS) in the same plane, exposed to solvent and in a symmetric position for both monomers. The MDoS region stabilizes the toxin on membrane by the interaction of charged residues with phospholipid head groups. Subsequently, the MDiS region destabilizes the membrane with penetration of hydrophobic residues. This insertion causes a disorganization of the membrane, allowing an uncontrolled influx of ions (i.e. calcium and sodium), and eventually triggering irreversible intracellular alterations and cell death. The polypeptide is Basic phospholipase A2 homolog blK-PLA2 (Bothrops leucurus (Whitetail lancehead)).